We begin with the raw amino-acid sequence, 167 residues long: Probable chemoreceptor glutamine deamidase CheD (167 aa).

The protein belongs to the CheD family.

It catalyses the reaction L-glutaminyl-[protein] + H2O = L-glutamyl-[protein] + NH4(+). Functionally, probably deamidates glutamine residues to glutamate on methyl-accepting chemotaxis receptors (MCPs), playing an important role in chemotaxis. This is Probable chemoreceptor glutamine deamidase CheD from Natronomonas pharaonis (strain ATCC 35678 / DSM 2160 / CIP 103997 / JCM 8858 / NBRC 14720 / NCIMB 2260 / Gabara) (Halobacterium pharaonis).